The chain runs to 383 residues: Glucose-1-phosphate adenylyltransferase (383 aa).

Residues tyrosine 99, glycine 164, 179-180, and serine 190 contribute to the alpha-D-glucose 1-phosphate site; that span reads EK.

It belongs to the bacterial/plant glucose-1-phosphate adenylyltransferase family. As to quaternary structure, homotetramer.

The catalysed reaction is alpha-D-glucose 1-phosphate + ATP + H(+) = ADP-alpha-D-glucose + diphosphate. It participates in glycan biosynthesis; glycogen biosynthesis. In terms of biological role, involved in the biosynthesis of ADP-glucose, a building block required for the elongation reactions to produce glycogen. Catalyzes the reaction between ATP and alpha-D-glucose 1-phosphate (G1P) to produce pyrophosphate and ADP-Glc. The sequence is that of Glucose-1-phosphate adenylyltransferase from Halalkalibacterium halodurans (strain ATCC BAA-125 / DSM 18197 / FERM 7344 / JCM 9153 / C-125) (Bacillus halodurans).